Consider the following 214-residue polypeptide: Octanoyltransferase (214 aa).

Residues 28-203 (GSGAETLLLL…RFEGFLDEFM (176 aa)) enclose the BPL/LPL catalytic domain. Substrate is bound by residues 66 to 73 (RGGDVTYH), 133 to 135 (SIG), and 146 to 148 (GFA). The active-site Acyl-thioester intermediate is C164.

Belongs to the LipB family.

Its subcellular location is the cytoplasm. The enzyme catalyses octanoyl-[ACP] + L-lysyl-[protein] = N(6)-octanoyl-L-lysyl-[protein] + holo-[ACP] + H(+). It functions in the pathway protein modification; protein lipoylation via endogenous pathway; protein N(6)-(lipoyl)lysine from octanoyl-[acyl-carrier-protein]: step 1/2. In terms of biological role, catalyzes the transfer of endogenously produced octanoic acid from octanoyl-acyl-carrier-protein onto the lipoyl domains of lipoate-dependent enzymes. Lipoyl-ACP can also act as a substrate although octanoyl-ACP is likely to be the physiological substrate. In Geotalea uraniireducens (strain Rf4) (Geobacter uraniireducens), this protein is Octanoyltransferase.